A 767-amino-acid chain; its full sequence is MTISPPERGSDAKSQVEKVDNPATFELFGKPGHFDRALAKGPKTTTWVWNLHANAHDFDAHTSDLQEVSRRIFSAHFGHLAVIFIWLSGAFFHGARFSNYSGWLADPTHVKPSAQVVWPIFGQEILNGDMGAGFNGIQITSGLFHVWRGWGITSETQLMALAIGALVMAGLMLNAGVFHYHKSAPKLEWFQNVESMLNHHLAGLLGLGSLSWAGHLIHVSLPVTKLMDAIDAGEPLVLNGTTIASAADIPLPHEFFNQDLLAQLYPGIGSGISAFFSGNWAAYGDFLTFKGGLNPVTGSLWMTDIAHHHVAIAVLFIVAGHMYRTNWGIGHSIKEIHEGQKGDPLLFPAPNGHDGLYEFMTTSWHAQLAVNLAMLGSLSIIVAQHMYAMPPYAYMAVDYPTQIGLFTHHIWIGGFLIVGGAAHAAIAMVRDYDPAKHIDNVLDRVLKARDAIISHLNWVCIWLGAHSFGLYIHNDTMRALGRPQDMFSDQAISIQPIFAQWIQNAHAAAAGSTAPNALAGVSEVFNGSVVAVGGKVAAAPMPLGTADFMVHHIHAFTIHVTVLILLKGVLYARSSRLIPDKANLGFRFSCDGPGRGGTCQVSAWDHVFLGLFWMYNSLSIVIFHFSWKMQSDIWGTVNADGSVAHITNGNFAQSAITINGWLRDYLWAQAVQVINSYGSSTSAYGIMFLGAHFIWAFSLMFLFSGRGYWQELIESIVWAHNKLKVAPAIQPRALSIIQGRAVGVAHYLLGGIATTWAFFHAHILVVG.

Helical transmembrane passes span 72-95 (IFSAHFGHLAVIFIWLSGAFFHGA), 158-181 (LMALAIGALVMAGLMLNAGVFHYH), 197-221 (LNHHLAGLLGLGSLSWAGHLIHVSL), 305-323 (IAHHHVAIAVLFIVAGHMY), 364-387 (WHAQLAVNLAMLGSLSIIVAQHMY), 403-429 (IGLFTHHIWIGGFLIVGGAAHAAIAMV), 451-473 (AIISHLNWVCIWLGAHSFGLYIH), and 548-566 (FMVHHIHAFTIHVTVLILL). [4Fe-4S] cluster is bound by residues C590 and C599. A run of 2 helical transmembrane segments spans residues 606-627 (HVFLGLFWMYNSLSIVIFHFSW) and 681-703 (TSAYGIMFLGAHFIWAFSLMFLF). H692 provides a ligand contact to chlorophyll a'. Chlorophyll a-binding residues include M700 and Y708. W709 lines the phylloquinone pocket. Residues 741–761 (AVGVAHYLLGGIATTWAFFHA) form a helical membrane-spanning segment.

Belongs to the PsaA/PsaB family. In terms of assembly, the PsaA/B heterodimer binds the P700 chlorophyll special pair and subsequent electron acceptors. PSI consists of a core antenna complex that captures photons, and an electron transfer chain that converts photonic excitation into a charge separation. The cyanobacterial PSI reaction center is composed of one copy each of PsaA,B,C,D,E,F,I,J,K,L,M and X, and forms trimeric complexes. The cofactor is PSI electron transfer chain: 5 chlorophyll a, 1 chlorophyll a', 2 phylloquinones and 3 4Fe-4S clusters. PSI core antenna: 90 chlorophyll a, 22 carotenoids, 3 phospholipids and 1 galactolipid. P700 is a chlorophyll a/chlorophyll a' dimer, A0 is one or more chlorophyll a, A1 is one or both phylloquinones and FX is a shared 4Fe-4S iron-sulfur center..

It localises to the cellular thylakoid membrane. The catalysed reaction is reduced [plastocyanin] + hnu + oxidized [2Fe-2S]-[ferredoxin] = oxidized [plastocyanin] + reduced [2Fe-2S]-[ferredoxin]. Its function is as follows. PsaA and PsaB bind P700, the primary electron donor of photosystem I (PSI), as well as the electron acceptors A0, A1 and FX. PSI is a plastocyanin/cytochrome c6-ferredoxin oxidoreductase, converting photonic excitation into a charge separation, which transfers an electron from the donor P700 chlorophyll pair to the spectroscopically characterized acceptors A0, A1, FX, FA and FB in turn. Oxidized P700 is reduced on the lumenal side of the thylakoid membrane by plastocyanin or cytochrome c6. This is Photosystem I P700 chlorophyll a apoprotein A1 from Synechococcus sp. (strain CC9902).